Consider the following 377-residue polypeptide: tRNA-specific 2-thiouridylase MnmA (377 aa).

ATP is bound by residues 18 to 25 (GMSGGVDS) and Met-44. An interaction with target base in tRNA region spans residues 104–106 (NPD). The active-site Nucleophile is the Cys-109. A disulfide bond links Cys-109 and Cys-209. An ATP-binding site is contributed by Gly-134. The interaction with tRNA stretch occupies residues 159 to 161 (KDQ). Cys-209 acts as the Cysteine persulfide intermediate in catalysis. Residues 324–325 (RY) form an interaction with tRNA region.

Belongs to the MnmA/TRMU family.

It localises to the cytoplasm. The enzyme catalyses S-sulfanyl-L-cysteinyl-[protein] + uridine(34) in tRNA + AH2 + ATP = 2-thiouridine(34) in tRNA + L-cysteinyl-[protein] + A + AMP + diphosphate + H(+). Catalyzes the 2-thiolation of uridine at the wobble position (U34) of tRNA, leading to the formation of s(2)U34. The sequence is that of tRNA-specific 2-thiouridylase MnmA from Photobacterium profundum (strain SS9).